A 201-amino-acid polypeptide reads, in one-letter code: Small ribosomal subunit protein uS4c (201 aa).

The tract at residues 17 to 36 (ALPGLTRKTPKSGSNLKKKF) is disordered. The S4 RNA-binding domain occupies 89 to 157 (MRLDNILFRL…VQNYIASSDP (69 aa)).

This sequence belongs to the universal ribosomal protein uS4 family. In terms of assembly, part of the 30S ribosomal subunit. Contacts protein S5. The interaction surface between S4 and S5 is involved in control of translational fidelity.

It is found in the plastid. Its subcellular location is the chloroplast. Its function is as follows. One of the primary rRNA binding proteins, it binds directly to 16S rRNA where it nucleates assembly of the body of the 30S subunit. In terms of biological role, with S5 and S12 plays an important role in translational accuracy. The chain is Small ribosomal subunit protein uS4c (rps4) from Agrostis stolonifera (Creeping bentgrass).